We begin with the raw amino-acid sequence, 179 residues long: Large ribosomal subunit protein uL6 (179 aa).

Belongs to the universal ribosomal protein uL6 family. Part of the 50S ribosomal subunit.

Functionally, this protein binds to the 23S rRNA, and is important in its secondary structure. It is located near the subunit interface in the base of the L7/L12 stalk, and near the tRNA binding site of the peptidyltransferase center. The polypeptide is Large ribosomal subunit protein uL6 (Chlorobium phaeobacteroides (strain DSM 266 / SMG 266 / 2430)).